Consider the following 97-residue polypeptide: Thiosulfate sulfurtransferase/rhodanese-like domain-containing protein 3 (97 aa).

The Rhodanese domain occupies 32-84 (YKELKNLLNSKNIMLIDVREIWEILEYQKIPESINVPLDEVGEALQMNPRDFK). The residue at position 84 (K84) is an N6-succinyllysine.

This is Thiosulfate sulfurtransferase/rhodanese-like domain-containing protein 3 (TSTD3) from Homo sapiens (Human).